The sequence spans 1056 residues: Carbamoyl phosphate synthase large chain (1056 aa).

Residues 1–397 form a carboxyphosphate synthetic domain region; that stretch reads MPKKSHIKKV…AFKKALRSLD (397 aa). The ATP site is built by Arg127, Arg167, Gly173, Gly174, Glu206, Val208, Glu213, Gly239, Ile240, His241, Gln282, and Glu294. Residues 131-323 enclose the ATP-grasp 1 domain; sequence RDLMNAIGEP…IARVAAKIAI (193 aa). Mg(2+) is bound by residues Gln282, Glu294, and Asn296. Mn(2+)-binding residues include Gln282, Glu294, and Asn296. Positions 398–530 are oligomerization domain; it reads NDMQQHTNPS…YSTWEEGCEL (133 aa). The segment at 531-920 is carbamoyl phosphate synthetic domain; it reads VRDSAKKVLI…YKACTAADNT (390 aa). One can recognise an ATP-grasp 2 domain in the interval 662–853; it reads SRLLTRLEIP…LAKIAAKVMV (192 aa). Residues Arg698, Ser737, Leu739, Glu744, Gly769, Val770, His771, Ser772, Gln812, and Glu824 each contribute to the ATP site. Mg(2+)-binding residues include Gln812, Glu824, and Asn826. 3 residues coordinate Mn(2+): Gln812, Glu824, and Asn826. Residues 919 to 1056 enclose the MGS-like domain; that stretch reads NTLPTTGNVF…EPLGHYHGLM (138 aa). The allosteric domain stretch occupies residues 921-1056; that stretch reads LPTTGNVFIS…EPLGHYHGLM (136 aa).

This sequence belongs to the CarB family. In terms of assembly, composed of two chains; the small (or glutamine) chain promotes the hydrolysis of glutamine to ammonia, which is used by the large (or ammonia) chain to synthesize carbamoyl phosphate. Tetramer of heterodimers (alpha,beta)4. It depends on Mg(2+) as a cofactor. Requires Mn(2+) as cofactor.

It catalyses the reaction hydrogencarbonate + L-glutamine + 2 ATP + H2O = carbamoyl phosphate + L-glutamate + 2 ADP + phosphate + 2 H(+). The enzyme catalyses hydrogencarbonate + NH4(+) + 2 ATP = carbamoyl phosphate + 2 ADP + phosphate + 2 H(+). It functions in the pathway amino-acid biosynthesis; L-arginine biosynthesis; carbamoyl phosphate from bicarbonate: step 1/1. It participates in pyrimidine metabolism; UMP biosynthesis via de novo pathway; (S)-dihydroorotate from bicarbonate: step 1/3. Its function is as follows. Large subunit of the glutamine-dependent carbamoyl phosphate synthetase (CPSase). CPSase catalyzes the formation of carbamoyl phosphate from the ammonia moiety of glutamine, carbonate, and phosphate donated by ATP, constituting the first step of 2 biosynthetic pathways, one leading to arginine and/or urea and the other to pyrimidine nucleotides. The large subunit (synthetase) binds the substrates ammonia (free or transferred from glutamine from the small subunit), hydrogencarbonate and ATP and carries out an ATP-coupled ligase reaction, activating hydrogencarbonate by forming carboxy phosphate which reacts with ammonia to form carbamoyl phosphate. The sequence is that of Carbamoyl phosphate synthase large chain from Methanoculleus marisnigri (strain ATCC 35101 / DSM 1498 / JR1).